Reading from the N-terminus, the 54-residue chain is VATVDCSDYPRPDCTLEYMPLCGSDNKTYGNKCNFCNAVVDSNGTLTLSHFGKC.

Positions V4–C54 constitute a Kazal-like domain. Intrachain disulfides connect C6–C36, C14–C33, and C22–C54. N43 carries N-linked (GlcNAc...) asparagine glycosylation.

It is found in the secreted. The polypeptide is Ovomucoid (Dendrocygna eytoni (Plumed whistling-duck)).